A 485-amino-acid polypeptide reads, in one-letter code: ATP synthase subunit beta (485 aa).

158-165 (GGAGVGKT) is a binding site for ATP.

The protein belongs to the ATPase alpha/beta chains family. As to quaternary structure, F-type ATPases have 2 components, CF(1) - the catalytic core - and CF(0) - the membrane proton channel. CF(1) has five subunits: alpha(3), beta(3), gamma(1), delta(1), epsilon(1). CF(0) has four main subunits: a(1), b(1), b'(1) and c(9-12).

Its subcellular location is the cell inner membrane. It catalyses the reaction ATP + H2O + 4 H(+)(in) = ADP + phosphate + 5 H(+)(out). In terms of biological role, produces ATP from ADP in the presence of a proton gradient across the membrane. The catalytic sites are hosted primarily by the beta subunits. This is ATP synthase subunit beta from Erythrobacter litoralis (strain HTCC2594).